Consider the following 208-residue polypeptide: Protein-L-isoaspartate O-methyltransferase (208 aa).

Ser59 is an active-site residue.

This sequence belongs to the methyltransferase superfamily. L-isoaspartyl/D-aspartyl protein methyltransferase family.

It is found in the cytoplasm. It carries out the reaction [protein]-L-isoaspartate + S-adenosyl-L-methionine = [protein]-L-isoaspartate alpha-methyl ester + S-adenosyl-L-homocysteine. Functionally, catalyzes the methyl esterification of L-isoaspartyl residues in peptides and proteins that result from spontaneous decomposition of normal L-aspartyl and L-asparaginyl residues. It plays a role in the repair and/or degradation of damaged proteins. This is Protein-L-isoaspartate O-methyltransferase from Aliivibrio salmonicida (strain LFI1238) (Vibrio salmonicida (strain LFI1238)).